Reading from the N-terminus, the 126-residue chain is Acidic phospholipase A2 2 (126 aa).

Positions 1–7 (SNRPMPL) are excised as a propeptide. 7 disulfide bridges follow: cysteine 18–cysteine 78, cysteine 33–cysteine 125, cysteine 35–cysteine 51, cysteine 50–cysteine 106, cysteine 57–cysteine 99, cysteine 67–cysteine 92, and cysteine 85–cysteine 97. Ca(2+)-binding residues include tyrosine 34, glycine 36, and glycine 38. Histidine 54 is a catalytic residue. Aspartate 55 lines the Ca(2+) pocket. Aspartate 100 is a catalytic residue.

This sequence belongs to the phospholipase A2 family. Group I subfamily. D49 sub-subfamily. As to quaternary structure, heterodimer formed between two homologous isoforms: isoform 1 and isoform 2. It depends on Ca(2+) as a cofactor. In terms of tissue distribution, expressed by the venom gland.

The protein resides in the secreted. The catalysed reaction is a 1,2-diacyl-sn-glycero-3-phosphocholine + H2O = a 1-acyl-sn-glycero-3-phosphocholine + a fatty acid + H(+). In terms of biological role, PLA2 catalyzes the calcium-dependent hydrolysis of the 2-acyl groups in 3-sn-phosphoglycerides. This Naja sagittifera (Andaman cobra) protein is Acidic phospholipase A2 2.